A 435-amino-acid polypeptide reads, in one-letter code: Prenyltransferase nanD (435 aa).

Position 101 (Glu101) interacts with substrate. Positions 114, 202, and 204 each coordinate dimethylallyl diphosphate. Tyr206 serves as a coordination point for substrate. The dimethylallyl diphosphate site is built by Lys280, Tyr282, Tyr364, Tyr429, and Tyr433.

The protein belongs to the tryptophan dimethylallyltransferase family.

Its pathway is secondary metabolite biosynthesis. Its function is as follows. Prenyltransferase; part of the gene cluster that mediates the biosynthesis of the benzazepine alkaloid nanangelenin A which contains an unprecedented 3,4-dihydro-1-benzazepine-2,5-dione-N-prenyl-N-acetoxy-anthranilamide scaffold. The first step of nanangelenin biosynthesis is catalyzed by the indoleamine 2,3-dioxygenase nanC which produces N-formyl-kynurenine through the catabolism of tryptophan. The two-module NRPS nanA then utilizes anthranilate (Ant) and L-kynurenine (L-Kyn) to assemble the dipeptide product nanangelenin B. The first adenylation domain of nanA (A1) loads anthranilate onto the T1 domain, while A2 loads kynurenine, generated through spontaneous nonenzymatic deformylation of the nanC-supplied N-formyl-kynurenine. The peptide bond formation between the tethered amino acids is catalyzed by the first condensation domain (C1) between anthranilate's carbonyl carbon and kynurenine's aliphatic primary amine. The second C domain (C2) catalyzes the final cyclization event between the aromatic amine of kynurenine and the tethered carbonyl carbon, yielding nanangelenin B. The terminal T3 domain enhances the catalytic efficiency of C2, suggesting the T2-tethered Ant-L-Kyn is transferred to T3 prior to cyclization by C2. Once released from nanA, nanangelenin B is then prenylated by the prenyltransferase nanD to form nanangelenin C. Nanangelenin C is then N-hydroxylated by the FAD-dependent monooxygenase nanF and further acetylated by the acetyltransferase nanB to yield nanangelenin F. Finally, the N-methyltransferase nanE methylates the amide nitrogen of 1-benzazepine to convert nanangelenin F into nanangelenin A. NanE is also able to methylate most of the intermediates of the pathway such as nanangelenin B and nanangelenin C to produce nanangelenin D and nanangelenin E, respectively. This Aspergillus nanangensis protein is Prenyltransferase nanD.